We begin with the raw amino-acid sequence, 527 residues long: uncharacterized protein (527 aa).

This is an uncharacterized protein from Schizosaccharomyces pombe (strain 972 / ATCC 24843) (Fission yeast).